Reading from the N-terminus, the 566-residue chain is Arginine--tRNA ligase (566 aa).

Positions 124 to 134 match the 'HIGH' region motif; the sequence is ANPNGPLHIGH.

This sequence belongs to the class-I aminoacyl-tRNA synthetase family.

It localises to the cytoplasm. It catalyses the reaction tRNA(Arg) + L-arginine + ATP = L-arginyl-tRNA(Arg) + AMP + diphosphate. The protein is Arginine--tRNA ligase (argS) of Methanocaldococcus jannaschii (strain ATCC 43067 / DSM 2661 / JAL-1 / JCM 10045 / NBRC 100440) (Methanococcus jannaschii).